The chain runs to 337 residues: GTPase Obg (337 aa).

An Obg domain is found at 4 to 162; sequence SNFIDYVKVC…AWVILELKVL (159 aa). An OBG-type G domain is found at 163-329; that stretch reads ADVGLVGFPN…LKDLLWTTMN (167 aa). Residues 169 to 176, 194 to 198, 216 to 219, 283 to 286, and 310 to 312 contribute to the GTP site; these read GFPNAGKS, FTTLA, DIPG, SKSD, and SSY. The Mg(2+) site is built by serine 176 and threonine 196.

The protein belongs to the TRAFAC class OBG-HflX-like GTPase superfamily. OBG GTPase family. In terms of assembly, monomer. Requires Mg(2+) as cofactor.

It localises to the cytoplasm. Its function is as follows. An essential GTPase which binds GTP, GDP and possibly (p)ppGpp with moderate affinity, with high nucleotide exchange rates and a fairly low GTP hydrolysis rate. Plays a role in control of the cell cycle, stress response, ribosome biogenesis and in those bacteria that undergo differentiation, in morphogenesis control. The protein is GTPase Obg of Cytophaga hutchinsonii (strain ATCC 33406 / DSM 1761 / CIP 103989 / NBRC 15051 / NCIMB 9469 / D465).